A 511-amino-acid polypeptide reads, in one-letter code: Phospho-2-dehydro-3-deoxyheptonate aldolase 1, chloroplastic (511 aa).

Residues 1 to 49 (MALSNTLSLSSSKSLVQSHLLHNPTPQPRFSLFPTTQHGRRHPISAVHA) constitute a chloroplast transit peptide.

This sequence belongs to the class-II DAHP synthase family. In terms of tissue distribution, higher levels seen in the cotyledons than in the leaves and flowers. Lower levels seen in the roots and stems.

It localises to the plastid. It is found in the chloroplast. It carries out the reaction D-erythrose 4-phosphate + phosphoenolpyruvate + H2O = 7-phospho-2-dehydro-3-deoxy-D-arabino-heptonate + phosphate. It functions in the pathway metabolic intermediate biosynthesis; chorismate biosynthesis; chorismate from D-erythrose 4-phosphate and phosphoenolpyruvate: step 1/7. Its function is as follows. May be involved in the synthesis of secondary metabolites derived from intermediates of the pre-chorismate pathway up to shikimate. In Solanum lycopersicum (Tomato), this protein is Phospho-2-dehydro-3-deoxyheptonate aldolase 1, chloroplastic.